A 151-amino-acid chain; its full sequence is uncharacterized protein (151 aa).

The interval 1-24 (MHAKTKKLGTDTSYKRPQVTAQEQ) is disordered.

This is an uncharacterized protein from Acanthamoeba polyphaga mimivirus (APMV).